We begin with the raw amino-acid sequence, 209 residues long: MGKKKRSASSSRWLNEHFSDQFVQKAHKQKLRSRAYFKIDEIQQTDKLFKQGMTVVDLGAAPGGWSQYVVSQIGGKGRVIACDILEMDPIVGVDFLQGDFRDENVLNALLERVGEAKVDVVMSDMAPNFSGMPSVDIPRAMYLVELALDMCKQVLASKGSFVVKVFQGEGFDEYLREIRSLFNVVKVRKPEASRGRSREVYIVATGYKG.

5 residues coordinate S-adenosyl-L-methionine: G63, W65, D83, D99, and D124. The Proton acceptor role is filled by K164. Residues 191 to 209 (EASRGRSREVYIVATGYKG) form the TRAM domain.

The protein belongs to the class I-like SAM-binding methyltransferase superfamily. RNA methyltransferase RlmE family.

The protein localises to the cytoplasm. The enzyme catalyses uridine(2552) in 23S rRNA + S-adenosyl-L-methionine = 2'-O-methyluridine(2552) in 23S rRNA + S-adenosyl-L-homocysteine + H(+). Functionally, specifically methylates the uridine in position 2552 of 23S rRNA at the 2'-O position of the ribose in the fully assembled 50S ribosomal subunit. In Haemophilus influenzae (strain 86-028NP), this protein is Ribosomal RNA large subunit methyltransferase E.